A 134-amino-acid polypeptide reads, in one-letter code: Large ribosomal subunit protein bL20 (134 aa).

Belongs to the bacterial ribosomal protein bL20 family.

Its function is as follows. Binds directly to 23S ribosomal RNA and is necessary for the in vitro assembly process of the 50S ribosomal subunit. It is not involved in the protein synthesizing functions of that subunit. In Rhizobium leguminosarum bv. trifolii (strain WSM2304), this protein is Large ribosomal subunit protein bL20.